The primary structure comprises 665 residues: MTDLQSKYSKLAQEYSKLRAQNQVLKKAVVDEQSSCNSLKDELKQKEQSLRRVEQEMDSLSFRNQQLMKRVELLQEELLLSESKSKKSRSKGDSPSQVSLQAQSVFDEDLHKKIQENERLHIQWLEAQEQHQQQEAQLSSRLQQLQEEAQEHQAQLEELSCRHAHTIHTLQEDKATLEVKLQTLEREARDCRVRTEECQQQLRKYQSEVSSQLKHSSSVIQEKVPFNDTQLSDYNSLNVPAHNRRHQLRAREVAAQALVFLQNLVSALLNFHSYSEQRVQIYPRDSSIETISAVNQKFSQYLHENASYLRQLEEDLLQLHQSITEDLPAATQKFCTTNECLLSSLASLTSSSGKMATFFSNSLDFLTSCAGYSPSGALLKPLQADSVMQSKRRAAAYISSVRQARAESVPYGEALANRHILTSSTESREGLMQQVLQSQQKISRLEQEKEHWLLEAQLAQVRLQKESARIAQLEAQVCVSAPQSQLCASAAESPVCVSAAESQVCVSAAETPSEPALADAPEPLQDTSVVGVLSIRSCSESSADQDSREQLIKTHYMSRVSELTTQLQICDSKAVHFHAECRAVAKRLAMAERSRDTLGEELKLANQNITRLQDELSTTKRSYEDQLSMMSDHLCSMNETLSQQRETIDTLKLSAKGNAKKNKSR.

4 coiled-coil regions span residues 1-84 (MTDL…SESK), 125-206 (LEAQ…RKYQ), 426-477 (ESRE…EAQV), and 586-627 (KRLA…EDQL).

Component of the FERRY complex.

Its subcellular location is the early endosome. In terms of biological role, component of the FERRY complex (Five-subunit Endosomal Rab5 and RNA/ribosome intermediary). The FERRY complex directly interacts with mRNAs and RAB5A, and functions as a RAB5A effector involved in the localization and the distribution of specific mRNAs most likely by mediating their endosomal transport. The complex recruits mRNAs and ribosomes to early endosomes through direct mRNA-interaction. Putative regulator of protein phosphatase 1 (PP1) activity. May play a role in the endosomal sorting process or in endosome maturation pathway. The sequence is that of Protein phosphatase 1 regulatory subunit 21 (ppp1r21) from Danio rerio (Zebrafish).